The following is a 198-amino-acid chain: Small ribosomal subunit protein uS2 (198 aa).

This sequence belongs to the universal ribosomal protein uS2 family.

The chain is Small ribosomal subunit protein uS2 (rps2) from Methanothermobacter thermautotrophicus (strain ATCC 29096 / DSM 1053 / JCM 10044 / NBRC 100330 / Delta H) (Methanobacterium thermoautotrophicum).